Consider the following 110-residue polypeptide: Nucleoid-associated protein RALTA_A1934 (110 aa).

Over residues 88–98 (TTQEKMGSMTS) the composition is skewed to polar residues. The disordered stretch occupies residues 88-110 (TTQEKMGSMTSGLPLPPGFKLPF). Residues 101-110 (PLPPGFKLPF) are compositionally biased toward pro residues.

It belongs to the YbaB/EbfC family. In terms of assembly, homodimer.

The protein localises to the cytoplasm. It is found in the nucleoid. Binds to DNA and alters its conformation. May be involved in regulation of gene expression, nucleoid organization and DNA protection. This Cupriavidus taiwanensis (strain DSM 17343 / BCRC 17206 / CCUG 44338 / CIP 107171 / LMG 19424 / R1) (Ralstonia taiwanensis (strain LMG 19424)) protein is Nucleoid-associated protein RALTA_A1934.